A 361-amino-acid chain; its full sequence is Probable purine permease 13 (361 aa).

The next 10 membrane-spanning stretches (helical) occupy residues 35–55 (WILV…AVLL), 68–88 (WIST…LCFL), 103–123 (LVWI…LYSF), 129–151 (SAST…SYYI), 156–176 (ITCL…LVSL), 192–212 (LIGC…LSLM), 238–258 (VASC…LLSV), 268–288 (VIYV…SVGA), 289–309 (VALI…LSLI), and 323–343 (LTEV…FYIY).

The protein belongs to the purine permeases (TC 2.A.7.14) family.

It localises to the membrane. The sequence is that of Probable purine permease 13 (PUP13) from Arabidopsis thaliana (Mouse-ear cress).